A 294-amino-acid polypeptide reads, in one-letter code: 4-hydroxy-tetrahydrodipicolinate synthase (294 aa).

A pyruvate-binding site is contributed by threonine 45. Tyrosine 133 serves as the catalytic Proton donor/acceptor. Lysine 161 serves as the catalytic Schiff-base intermediate with substrate. Pyruvate is bound at residue isoleucine 203.

Belongs to the DapA family. In terms of assembly, homotetramer; dimer of dimers.

It localises to the cytoplasm. It catalyses the reaction L-aspartate 4-semialdehyde + pyruvate = (2S,4S)-4-hydroxy-2,3,4,5-tetrahydrodipicolinate + H2O + H(+). It participates in amino-acid biosynthesis; L-lysine biosynthesis via DAP pathway; (S)-tetrahydrodipicolinate from L-aspartate: step 3/4. Functionally, catalyzes the condensation of (S)-aspartate-beta-semialdehyde [(S)-ASA] and pyruvate to 4-hydroxy-tetrahydrodipicolinate (HTPA). This is 4-hydroxy-tetrahydrodipicolinate synthase from Buchnera aphidicola subsp. Acyrthosiphon pisum (strain APS) (Acyrthosiphon pisum symbiotic bacterium).